A 150-amino-acid chain; its full sequence is Large ribosomal subunit protein bL9 (150 aa).

This sequence belongs to the bacterial ribosomal protein bL9 family.

In terms of biological role, binds to the 23S rRNA. This is Large ribosomal subunit protein bL9 from Corynebacterium glutamicum (strain R).